Reading from the N-terminus, the 285-residue chain is ATP synthase gamma chain (285 aa).

The protein belongs to the ATPase gamma chain family. In terms of assembly, F-type ATPases have 2 components, CF(1) - the catalytic core - and CF(0) - the membrane proton channel. CF(1) has five subunits: alpha(3), beta(3), gamma(1), delta(1), epsilon(1). CF(0) has three main subunits: a, b and c.

It localises to the cell membrane. Produces ATP from ADP in the presence of a proton gradient across the membrane. The gamma chain is believed to be important in regulating ATPase activity and the flow of protons through the CF(0) complex. This Dehalococcoides mccartyi (strain ATCC BAA-2100 / JCM 16839 / KCTC 5957 / BAV1) protein is ATP synthase gamma chain.